Here is a 492-residue protein sequence, read N- to C-terminus: MADTRRVTDTLRRWAPILKVLAVLWLVLAIFMAIPLLVLIVESEPDALAFGLSIAIVLAAATLSWIVTWRIPVSLKPWQMFVLTTLSWVTISSFASLPLVLGAPQLSLTNAVFESVSAITTTGSTILVHIEDLSDGLKLWRGIMQWLGGIGIIVMGIAILPFLKVGGMRLFHTESSDWSDKVMPRTGGIAKATLSIYCGFTLLAAMAYYLGGMSPLDAVVHAMTSLATGGFANSDASFGAYAEQPQLLWMGSLFMLCGALPFVLYIRFLRGSRMALLRDQQVQGLLLLLLLVILALTIWRVSQGTPAFTSLTQVTFNVVSVVTTTGYASDDYSAWGATAYVAFFYLTFVGGCSGSTSGGMKIFRFQVAMLLLRDQLRYLIHASGVFVSRYNNQPLTDDITRGVVAFSFFFFLTVAGLALGLSLLGLDFTTALSGAATAVANVGPGLGETIGPAGNFAPLPDAAKWLLCVGMLMGRLEILTVLVLLTPMFWRQ.

10 helical membrane-spanning segments follow: residues 20-40 (VLAVLWLVLAIFMAIPLLVLI), 47-67 (ALAFGLSIAIVLAAATLSWIV), 81-101 (FVLTTLSWVTISSFASLPLVL), 143-163 (IMQWLGGIGIIVMGIAILPFL), 196-216 (IYCGFTLLAAMAYYLGGMSPL), 246-266 (QLLWMGSLFMLCGALPFVLYI), 282-302 (VQGLLLLLLLVILALTIWRVS), 334-354 (AWGATAYVAFFYLTFVGGCSG), 403-423 (VVAFSFFFFLTVAGLALGLSL), and 465-485 (WLLCVGMLMGRLEILTVLVLL).

The protein belongs to the TrkH potassium transport family.

The protein resides in the cell inner membrane. Medium-affinity potassium transport system. Probably interacts with Trk system potassium uptake protein TrkA. Main K(+) transporter in osmotically adapted cells. The sequence is that of Trk system potassium uptake protein TrkI (trkI) from Halomonas elongata (strain ATCC 33173 / DSM 2581 / NBRC 15536 / NCIMB 2198 / 1H9).